Here is a 1012-residue protein sequence, read N- to C-terminus: Ubiquitin-like modifier-activating enzyme 7 (1012 aa).

The stretch at 23-159 (GSPAMQRIQG…DTRGLVGQLF (137 aa)) is one 1-1 repeat. The interval 23–575 (GSPAMQRIQG…GTWGSATVFM (553 aa)) is 2 approximate repeats. At S266 the chain carries Phosphoserine. A 1-2 repeat occupies 423 to 575 (GAGFQEKLRR…GTWGSATVFM (153 aa)). 442-471 (AIGCELLKVFALVGLGAGNSGGLTVVDMDH) is a binding site for ATP. C599 serves as the catalytic Glycyl thioester intermediate.

This sequence belongs to the ubiquitin-activating E1 family. As to quaternary structure, (Microbial infection) Interacts with human cytomegalovirus proteins NEC2/UL50 and UL26; these interactions inhibit ISGylation and cause proteasomal degradation of UBA7. In terms of assembly, (Microbial infection) Interacts with rotavirus non-structural protein 5 (NSP5); this interaction promotes UBA7 proteasomal degradation. Monomer. Binds and is involved in the conjugation of G1P2/ISG15. In terms of processing, ISGylated. Ubiquitinated by RNF170. In terms of tissue distribution, expressed in a variety of normal and tumor cell types, but is reduced in lung cancer cell lines.

It is found in the cytoplasm. It localises to the nucleus. It participates in protein modification; protein ubiquitination. In terms of biological role, E1-activating enzyme that catalyzes the covalent conjugation of the ubiquitin-like protein product of ISG15 to additional interferon stimulated proteins (ISGs) as well as other cellular proteins such as P53 in a process termed protein ISGylation. Plays an essential role in antiviral immunity together with ISG15 by restricting the replication of many viruses including rabies virus, influenza virus, sindbis virus, rotavirus or human cytomegalovirus. For example, ISG15 modification of influenza A protein NS1 disrupts the association of the NS1 with importin-alpha leading to NS1 nuclear import inhibition. ISGylation of human cytomegalovirs protein UL26 regulates its stability and inhibits its activities to suppress NF-kappa-B signaling. In Homo sapiens (Human), this protein is Ubiquitin-like modifier-activating enzyme 7.